A 216-amino-acid chain; its full sequence is Peptide methionine sulfoxide reductase MsrA (216 aa).

Cys54 is a catalytic residue.

The protein belongs to the MsrA Met sulfoxide reductase family.

The catalysed reaction is L-methionyl-[protein] + [thioredoxin]-disulfide + H2O = L-methionyl-(S)-S-oxide-[protein] + [thioredoxin]-dithiol. It catalyses the reaction [thioredoxin]-disulfide + L-methionine + H2O = L-methionine (S)-S-oxide + [thioredoxin]-dithiol. Has an important function as a repair enzyme for proteins that have been inactivated by oxidation. Catalyzes the reversible oxidation-reduction of methionine sulfoxide in proteins to methionine. This is Peptide methionine sulfoxide reductase MsrA from Xylella fastidiosa (strain Temecula1 / ATCC 700964).